A 1207-amino-acid polypeptide reads, in one-letter code: DNA-directed RNA polymerase subunit beta' (1207 aa).

4 residues coordinate Zn(2+): Cys-60, Cys-62, Cys-75, and Cys-78. Mg(2+)-binding residues include Asp-449, Asp-451, and Asp-453. Zn(2+) contacts are provided by Cys-822, Cys-896, Cys-903, and Cys-906.

Belongs to the RNA polymerase beta' chain family. In terms of assembly, the RNAP catalytic core consists of 2 alpha, 1 beta, 1 beta' and 1 omega subunit. When a sigma factor is associated with the core the holoenzyme is formed, which can initiate transcription. Mg(2+) serves as cofactor. Requires Zn(2+) as cofactor.

It carries out the reaction RNA(n) + a ribonucleoside 5'-triphosphate = RNA(n+1) + diphosphate. Functionally, DNA-dependent RNA polymerase catalyzes the transcription of DNA into RNA using the four ribonucleoside triphosphates as substrates. This is DNA-directed RNA polymerase subunit beta' from Staphylococcus aureus (strain MRSA252).